The following is a 187-amino-acid chain: Ion-translocating oxidoreductase complex subunit B (187 aa).

The tract at residues 1–26 (MTHILFAVLVLALLALAFGIILGFAA) is hydrophobic. The region spanning 32-90 (EADPIVDQLDALLPQTQCGQCGYPGCKPYAEALANGDQINKCVPGGDATMRKIADLMGV) is the 4Fe-4S domain. [4Fe-4S] cluster-binding residues include Cys-49, Cys-52, Cys-57, Cys-73, Cys-115, Cys-118, Cys-121, Cys-125, Cys-145, Cys-148, Cys-151, and Cys-155. 4Fe-4S ferredoxin-type domains are found at residues 106 to 135 (KVAF…GATK) and 136 to 165 (AMHT…MIPV).

This sequence belongs to the 4Fe4S bacterial-type ferredoxin family. RnfB subfamily. In terms of assembly, the complex is composed of six subunits: RnfA, RnfB, RnfC, RnfD, RnfE and RnfG. [4Fe-4S] cluster is required as a cofactor.

Its subcellular location is the cell inner membrane. Its function is as follows. Part of a membrane-bound complex that couples electron transfer with translocation of ions across the membrane. This chain is Ion-translocating oxidoreductase complex subunit B, found in Aeromonas hydrophila subsp. hydrophila (strain ATCC 7966 / DSM 30187 / BCRC 13018 / CCUG 14551 / JCM 1027 / KCTC 2358 / NCIMB 9240 / NCTC 8049).